A 225-amino-acid chain; its full sequence is Octanoyltransferase (225 aa).

The 184-residue stretch at Glu31–Asp214 folds into the BPL/LPL catalytic domain. Residues Arg70–His77, Ser137–Gly139, and Gly150–Ala152 contribute to the substrate site. Cys168 functions as the Acyl-thioester intermediate in the catalytic mechanism.

It belongs to the LipB family.

The protein resides in the cytoplasm. The catalysed reaction is octanoyl-[ACP] + L-lysyl-[protein] = N(6)-octanoyl-L-lysyl-[protein] + holo-[ACP] + H(+). Its pathway is protein modification; protein lipoylation via endogenous pathway; protein N(6)-(lipoyl)lysine from octanoyl-[acyl-carrier-protein]: step 1/2. Functionally, catalyzes the transfer of endogenously produced octanoic acid from octanoyl-acyl-carrier-protein onto the lipoyl domains of lipoate-dependent enzymes. Lipoyl-ACP can also act as a substrate although octanoyl-ACP is likely to be the physiological substrate. This chain is Octanoyltransferase, found in Aliivibrio fischeri (strain ATCC 700601 / ES114) (Vibrio fischeri).